Consider the following 398-residue polypeptide: Sex hormone-binding globulin (398 aa).

The signal sequence occupies residues 1–31; that stretch reads MATPPLVPLLLLLLLLLPHAHHRLALRSVLA. 2 Laminin G-like domains span residues 41–213 and 220–386; these read VHLI…RRSC and GIFF…THSC. Disulfide bonds link C189–C213 and C358–C386. N376 and N392 each carry an N-linked (GlcNAc...) asparagine glycan.

In terms of assembly, homodimer.

It is found in the secreted. Functions as an androgen transport protein, but may also be involved in receptor mediated processes. Each dimer binds one molecule of steroid. Specific for 5-alpha-dihydrotestosterone, testosterone, and 17-beta-estradiol. Regulates the plasma metabolic clearance rate of steroid hormones by controlling their plasma concentration. The chain is Sex hormone-binding globulin (SHBG) from Oryctolagus cuniculus (Rabbit).